We begin with the raw amino-acid sequence, 637 residues long: MNEQVIVQRDPHEPLKTDKREKNWAQHAELIAALVSGALILAGWLLSGYQVLSIILFLLAFVIGGFAKAKEGIEETLESKTLNVELLMIFAAIGSALIGYWAEGAILIFIFSLSGALETYTMNKSSRDLTSLMQLEPEEATLMVNGETKRVPVSDLQAGDMIVIKPGERVAADGIIESGSTSLDESALTGESMPVEKNTGDTVFTGTVNRNGSLTVRVTKANEDSLFRKIIKLVESAQNSVSPAQAFIERFENAYVKGVLIAVALLLFVPHFALGWSWSETFYRAMVFMVVASPCALVASIMPAALSLISNGARNGMLVKGSVFLEQLGSVQMIAFDKTGTVTKGQPAVETIRIAEGFSEAEVLEAVYAIETQSSHPLAQAITAYAESRGVNQSGYISIEETSGFGVMAEVSGAKWKVGKAGFIGEEMAAQFMKQTASDVIQSGHTIVFVKKDDQIAGCIALKDQIRPEAKEVMEELNRLGIKTAMLTGDHEDTAQAIAKEAGMTTVVAECLPDQKVNEIKRLKEEFGTIAMVGDGINDAPALKAADVGIAMGGGTDVALETADMVLMKNDLKKLVNMCRLSRKMNRIIKQNIVFSLAVICLLICANFLQAMELPFGVIGHEGSTILVILNGLRLLK.

4 helical membrane passes run 43-63, 89-109, 258-278, and 286-306; these read GWLL…AFVI, IFAA…ILIF, GVLI…GWSW, and MVFM…PAAL. D337 serves as the catalytic 4-aspartylphosphate intermediate. Mg(2+) is bound by residues D535 and D539. The helical transmembrane segment at 599 to 619 threads the bilayer; that stretch reads VICLLICANFLQAMELPFGVI.

The protein belongs to the cation transport ATPase (P-type) (TC 3.A.3) family. Type IB subfamily.

The protein resides in the cell membrane. The enzyme catalyses Zn(2+)(out) + ATP(in) + H2O(in) = Zn(2+)(in) + ADP(in) + phosphate(in) + H(+)(in). Its function is as follows. Couples the hydrolysis of ATP with the transport of zinc into the cell. Plays an important role in protecting cells against oxidative stress. ZosA-mediated zinc transport is required for post-transcriptional control of comK and competence development. The polypeptide is Zinc-transporting ATPase (zosA) (Bacillus subtilis (strain 168)).